The primary structure comprises 472 residues: Mitochondrial substrate carrier family protein C (472 aa).

The Mitochondrial intermembrane portion of the chain corresponds to 1–189 (MVLNENDKEF…ASSLRNTITY (189 aa)). EF-hand domains follow at residues 6-41 (NDKE…LRIP), 42-70 (SSEK…FEDF), 73-108 (ENIK…LNIP), and 110-145 (YSEQ…LPNS). Ca(2+) is bound by residues aspartate 19, aspartate 21, asparagine 23, lysine 25, glutamate 30, aspartate 55, aspartate 57, aspartate 59, serine 61, glutamate 66, aspartate 86, asparagine 88, serine 90, threonine 92, glutamate 97, aspartate 123, asparagine 125, aspartate 127, glutamine 129, and glutamate 134. Solcar repeat units follow at residues 184 to 268 (RNTI…VKKL), 276 to 362 (LTSA…LKHK), and 375 to 461 (GQLL…FKKA). The helical transmembrane segment at 190–207 (MLAGSVAGFASRTSTAPL) threads the bilayer. Residues 208 to 242 (ERVKIMCQLNHGKPISLISAFKACYKDGGIKGFFR) lie on the Mitochondrial matrix side of the membrane. The helical transmembrane segment at 243 to 263 (GNLANIIKVSPESAVKFGTYE) threads the bilayer. At 264–281 (YVKKLFAENDCELTSAQR) the chain is on the mitochondrial intermembrane side. A helical transmembrane segment spans residues 282 to 302 (FISGSVAGVVSHTTLFPLEVV). At 303–330 (RLRLSAEIAGTYNGIFDCFKKIAISEKS) the chain is on the mitochondrial matrix side. The helical transmembrane segment at 331-351 (IRPFYRGLGASITATIPHSGV) threads the bilayer. Over 352–377 (NMMVYEFLKHKVIKMTGNEFPTAGQL) the chain is Mitochondrial intermembrane. A helical transmembrane segment spans residues 378–398 (LVCASTSSVCGQLVGYPFHVV). Residues 399–441 (KSRLITQGSSVNQEKYTGLFDGLTKIIKKEGPIGLYKGIVPSF) are Mitochondrial matrix-facing. Residues 442-462 (MKSIPSHSITFIVYEGFKKAF) form a helical membrane-spanning segment. At 463–472 (DVNLKEKKHH) the chain is on the mitochondrial intermembrane side.

It belongs to the mitochondrial carrier (TC 2.A.29) family.

It localises to the mitochondrion inner membrane. In terms of biological role, calcium-dependent mitochondrial solute carrier. Mitochondrial solute carriers shuttle metabolites, nucleotides, and cofactors through the mitochondrial inner membrane. The sequence is that of Mitochondrial substrate carrier family protein C (mcfC) from Dictyostelium discoideum (Social amoeba).